A 205-amino-acid polypeptide reads, in one-letter code: Small ribosomal subunit protein uS4 (205 aa).

The tract at residues 1–46 is disordered; the sequence is MSKRASSKYKIDRRMGENIWGRPKSPVNRREYGPGQHGQRRKGKLS. The S4 RNA-binding domain maps to 94–154; it reads SRLDAIVYRA…QKSKQLAIVL (61 aa).

The protein belongs to the universal ribosomal protein uS4 family. In terms of assembly, part of the 30S ribosomal subunit. Contacts protein S5. The interaction surface between S4 and S5 is involved in control of translational fidelity.

One of the primary rRNA binding proteins, it binds directly to 16S rRNA where it nucleates assembly of the body of the 30S subunit. In terms of biological role, with S5 and S12 plays an important role in translational accuracy. The sequence is that of Small ribosomal subunit protein uS4 from Allorhizobium ampelinum (strain ATCC BAA-846 / DSM 112012 / S4) (Agrobacterium vitis (strain S4)).